A 138-amino-acid chain; its full sequence is Histone H2AX (138 aa).

Residues methionine 1–serine 23 are disordered. An N-acetylserine modification is found at serine 2. N6-acetyllysine is present on residues lysine 6, lysine 9, lysine 11, lysine 13, and lysine 18. A Phosphoserine modification is found at serine 123. Residue lysine 124 forms a Glycyl lysine isopeptide (Lys-Gly) (interchain with G-Cter in ubiquitin) linkage. A phosphoserine mark is found at serine 125, serine 130, and serine 135. Positions serine 135–glutamine 136 match the [ST]-Q motif motif.

The protein belongs to the histone H2A family. In terms of assembly, the nucleosome is a histone octamer containing two molecules each of H2A, H2B, H3 and H4 assembled in one H3-H4 heterotetramer and two H2A-H2B heterodimers. The octamer wraps approximately 147 bp of DNA. Monoubiquitination of Lys-124 gives a specific tag for epigenetic transcriptional repression. Post-translationally, acetylation occurs almost exclusively in the MAC.

The protein resides in the nucleus. Its subcellular location is the chromosome. In terms of biological role, core component of nucleosome. Nucleosomes wrap and compact DNA into chromatin, limiting DNA accessibility to the cellular machineries which require DNA as a template. Histones thereby play a central role in transcription regulation, DNA repair, DNA replication and chromosomal stability. DNA accessibility is regulated via a complex set of post-translational modifications of histones, also called histone code, and nucleosome remodeling. This is Histone H2AX (HTA1) from Tetrahymena pyriformis.